A 349-amino-acid polypeptide reads, in one-letter code: 1-acylglycerol-3-phosphate O-acyltransferase ABHD5 (349 aa).

Residue Ala-2 is modified to N-acetylalanine. The region spanning 77-184 (PLVLLHGFGG…LVEPWGFPER (108 aa)) is the AB hydrolase-1 domain. Position 122 is a phosphoserine (Ser-122). The HXXXXD motif motif lies at 327–332 (HYVYAD).

This sequence belongs to the peptidase S33 family. ABHD4/ABHD5 subfamily. Interacts with ADRP, PLIN and PNPLA2. Interacts with PLIN5; promotes interaction with PNPLA2. As to expression, widely expressed in various tissues, including lymphocytes, liver, skeletal muscle and brain. Expressed by upper epidermal layers and dermal fibroblasts in skin, hepatocytes and neurons (at protein level).

It is found in the cytoplasm. It localises to the lipid droplet. Its subcellular location is the cytosol. It catalyses the reaction a 1-acyl-sn-glycero-3-phosphate + an acyl-CoA = a 1,2-diacyl-sn-glycero-3-phosphate + CoA. The enzyme catalyses 1-(9Z-octadecenoyl)-sn-glycero-3-phosphate + hexadecanoyl-CoA = 1-(9Z)-octadecenoyl-2-hexadecanoyl-sn-glycero-3-phosphate + CoA. It carries out the reaction 1-(9Z-octadecenoyl)-sn-glycero-3-phosphate + octadecanoyl-CoA = 1-(9Z-octadecenoyl)-2-octadecanoyl-sn-glycero-3-phosphate + CoA. The catalysed reaction is 1-(9Z-octadecenoyl)-sn-glycero-3-phosphate + (9Z)-octadecenoyl-CoA = 1,2-di-(9Z-octadecenoyl)-sn-glycero-3-phosphate + CoA. It catalyses the reaction 1-(9Z-octadecenoyl)-sn-glycero-3-phosphate + (5Z,8Z,11Z,14Z)-eicosatetraenoyl-CoA = 1-(9Z)-octadecenoyl-2-(5Z,8Z,11Z,14Z)-eicosatetraenoyl-sn-glycero-3-phosphate + CoA. The enzyme catalyses eicosanoyl-CoA + 1-(9Z-octadecenoyl)-sn-glycero-3-phosphate = 1-(9Z)-octadecenoyl-2-eicosanoyl-sn-glycero-3-phosphate + CoA. It carries out the reaction 1-hexadecanoyl-sn-glycero-3-phosphate + (9Z)-octadecenoyl-CoA = 1-hexadecanoyl-2-(9Z-octadecenoyl)-sn-glycero-3-phosphate + CoA. The catalysed reaction is 1-octadecanoyl-sn-glycero-3-phosphate + (9Z)-octadecenoyl-CoA = 1-octadecanoyl-2-(9Z-octadecenoyl)-sn-glycero-3-phosphate + CoA. It catalyses the reaction 1-(5Z,8Z,11Z,14Z-eicosatetraenoyl)-sn-glycero-3-phosphate + (9Z)-octadecenoyl-CoA = 1-(5Z,8Z,11Z,14Z)-eicosatetraenoyl-2-(9Z)-octadecenoyl-sn-glycero-3-phosphate + CoA. Its activity is regulated as follows. Acyltransferase activity is inhibited by detergents such as Triton X-100 and 3-[(3-cholamidopropyl)dimethylammonio]-1-propanesulfonate (CHAPS). Acyltransferase activity is inhibited by the presence of magnesium and calcium. Coenzyme A-dependent lysophosphatidic acid acyltransferase that catalyzes the transfer of an acyl group on a lysophosphatidic acid. Functions preferentially with 1-oleoyl-lysophosphatidic acid followed by 1-palmitoyl-lysophosphatidic acid, 1-stearoyl-lysophosphatidic acid and 1-arachidonoyl-lysophosphatidic acid as lipid acceptor. Functions preferentially with arachidonoyl-CoA followed by oleoyl-CoA as acyl group donors. Functions in phosphatidic acid biosynthesis. May regulate the cellular storage of triacylglycerol through activation of the phospholipase PNPLA2. Involved in keratinocyte differentiation. Regulates lipid droplet fusion. The sequence is that of 1-acylglycerol-3-phosphate O-acyltransferase ABHD5 from Homo sapiens (Human).